The following is a 150-amino-acid chain: Putative esterase VC_A0580 (150 aa).

The protein belongs to the thioesterase PaaI family.

This Vibrio cholerae serotype O1 (strain ATCC 39315 / El Tor Inaba N16961) protein is Putative esterase VC_A0580.